We begin with the raw amino-acid sequence, 734 residues long: Transcription factor EMB1444 (734 aa).

A disordered region spans residues Q537–Q566. A Nuclear localization signal motif is present at residues N548–G555. Residues A552–L601 form the bHLH domain. Residues K553–Q566 are compositionally biased toward basic and acidic residues.

It belongs to the bHLH protein family. LHW subfamily. In terms of assembly, homodimer.

Its subcellular location is the nucleus. Transcription factor that may regulate root development. The polypeptide is Transcription factor EMB1444 (Arabidopsis thaliana (Mouse-ear cress)).